Here is a 211-residue protein sequence, read N- to C-terminus: Interleukin-6 (211 aa).

Residues 1 to 25 form the signal peptide; sequence MNSLSTSTFSPVAFSLGLLLVMATA. Residues Cys-71 and Cys-77 are joined by a disulfide bond. The residue at position 80 (Ser-80) is a Phosphoserine. Cys-100 and Cys-110 are joined by a disulfide.

It belongs to the IL-6 superfamily. In terms of assembly, component of a hexamer of two molecules each of IL6, IL6R and IL6ST; first binds to IL6R to associate with the signaling subunit IL6ST. Interacts with IL6R (via the N-terminal ectodomain); this interaction may be affected by IL6R-binding with SORL1, hence decreasing IL6 cis signaling. Interacts with SORL1 (via the N-terminal ectodomain); this interaction leads to IL6 internalization and lysosomal degradation. May form a trimeric complex with the soluble SORL1 ectodomain and soluble IL6R receptor; this interaction might stabilize circulating IL6, hence promoting IL6 trans signaling.

It localises to the secreted. In terms of biological role, cytokine with a wide variety of biological functions in immunity, tissue regeneration, and metabolism. Binds to IL6R, then the complex associates to the signaling subunit IL6ST/gp130 to trigger the intracellular IL6-signaling pathway. The interaction with the membrane-bound IL6R and IL6ST stimulates 'classic signaling', whereas the binding of IL6 and soluble IL6R to IL6ST stimulates 'trans-signaling'. Alternatively, 'cluster signaling' occurs when membrane-bound IL6:IL6R complexes on transmitter cells activate IL6ST receptors on neighboring receiver cells. IL6 is a potent inducer of the acute phase response. Rapid production of IL6 contributes to host defense during infection and tissue injury, but excessive IL6 synthesis is involved in disease pathology. In the innate immune response, is synthesized by myeloid cells, such as macrophages and dendritic cells, upon recognition of pathogens through toll-like receptors (TLRs) at the site of infection or tissue injury. In the adaptive immune response, is required for the differentiation of B cells into immunoglobulin-secreting cells. Plays a major role in the differentiation of CD4(+) T cell subsets. Essential factor for the development of T follicular helper (Tfh) cells that are required for the induction of germinal-center formation. Required to drive naive CD4(+) T cells to the Th17 lineage. Also required for proliferation of myeloma cells and the survival of plasmablast cells. Its function is as follows. Acts as an essential factor in bone homeostasis and on vessels directly or indirectly by induction of VEGF, resulting in increased angiogenesis activity and vascular permeability. Induces, through 'trans-signaling' and synergistically with IL1B and TNF, the production of VEGF. Involved in metabolic controls, is discharged into the bloodstream after muscle contraction increasing lipolysis and improving insulin resistance. 'Trans-signaling' in central nervous system also regulates energy and glucose homeostasis. Mediates, through GLP-1, crosstalk between insulin-sensitive tissues, intestinal L cells and pancreatic islets to adapt to changes in insulin demand. Also acts as a myokine. Plays a protective role during liver injury, being required for maintenance of tissue regeneration. Also has a pivotal role in iron metabolism by regulating HAMP/hepcidin expression upon inflammation or bacterial infection. Through activation of IL6ST-YAP-NOTCH pathway, induces inflammation-induced epithelial regeneration. The sequence is that of Interleukin-6 (IL6) from Lama glama (Llama).